A 387-amino-acid chain; its full sequence is Succinyl-diaminopimelate desuccinylase (387 aa).

His-74 is a binding site for Zn(2+). Residue Asp-76 is part of the active site. Asp-107 is a binding site for Zn(2+). Glu-142 serves as the catalytic Proton acceptor. Residues Glu-143, Glu-171, and His-360 each contribute to the Zn(2+) site.

It belongs to the peptidase M20A family. DapE subfamily. As to quaternary structure, homodimer. It depends on Zn(2+) as a cofactor. Co(2+) is required as a cofactor.

The enzyme catalyses N-succinyl-(2S,6S)-2,6-diaminopimelate + H2O = (2S,6S)-2,6-diaminopimelate + succinate. Its pathway is amino-acid biosynthesis; L-lysine biosynthesis via DAP pathway; LL-2,6-diaminopimelate from (S)-tetrahydrodipicolinate (succinylase route): step 3/3. Catalyzes the hydrolysis of N-succinyl-L,L-diaminopimelic acid (SDAP), forming succinate and LL-2,6-diaminopimelate (DAP), an intermediate involved in the bacterial biosynthesis of lysine and meso-diaminopimelic acid, an essential component of bacterial cell walls. The chain is Succinyl-diaminopimelate desuccinylase from Rhodopseudomonas palustris (strain BisA53).